The primary structure comprises 114 residues: Flagellar hook-basal body complex protein FliE (114 aa).

Belongs to the FliE family.

The protein localises to the bacterial flagellum basal body. This Burkholderia multivorans (strain ATCC 17616 / 249) protein is Flagellar hook-basal body complex protein FliE.